The chain runs to 380 residues: N-acetylcysteine deacetylase (380 aa).

Cys-98, His-100, Glu-134, His-158, and His-350 together coordinate Ni(2+).

Belongs to the peptidase M20 family. Requires a divalent metal cation as cofactor.

It catalyses the reaction N-acetyl-L-cysteine + H2O = L-cysteine + acetate. The protein operates within amino-acid biosynthesis; L-cysteine biosynthesis. Its function is as follows. Probably catalyzes the deacetylation of N-acetylcysteine (NAC) to acetate and cysteine. Is involved in a S-(2-succino)cysteine (2SC) degradation pathway that allows B.subtilis to grow on 2SC as a sole sulfur source, via its metabolization to cysteine. The polypeptide is N-acetylcysteine deacetylase (Bacillus subtilis (strain 168)).